Consider the following 796-residue polypeptide: Peroxisome proliferator-activated receptor gamma coactivator 1-alpha (796 aa).

The residue at position 77 (Lys-77) is an N6-acetyllysine. The interval Pro-98–Glu-138 is disordered. Over residues Asp-114–Pro-127 the composition is skewed to polar residues. Residues Leu-142–Leu-146 carry the LXXLL motif motif. Lys-144 carries the post-translational modification N6-acetyllysine. Thr-176 is modified (phosphothreonine; by AMPK). At Lys-182 the chain carries N6-acetyllysine. Positions Tyr-211–Asn-275 are disordered. The segment covering Asp-217–Ala-235 has biased composition (basic and acidic residues). Over residues Thr-242–Leu-258 the composition is skewed to polar residues. N6-acetyllysine is present on residues Lys-252, Lys-269, Lys-276, Lys-319, Lys-345, Lys-411, Lys-440, and Lys-449. Positions Gly-288 to Ser-350 are disordered. Residues Gly-291–Thr-337 form an interaction with PPARG region. The tract at residues Glu-348–Arg-796 is mediates interaction with RNF34. Ser-537 bears the Phosphoserine; by AMPK mark. Disordered stretches follow at residues Phe-541–Ser-597 and His-611–Lys-669. The segment covering Gln-561–Cys-576 has biased composition (basic residues). Residues Ser-577 to Ser-597 show a composition bias toward low complexity. Residues Ser-620–Arg-629 are compositionally biased toward basic residues. Positions Pro-630–Lys-669 are enriched in basic and acidic residues. In terms of domain architecture, RRM spans Arg-675 to Arg-751. Lys-756 and Lys-777 each carry N6-acetyllysine.

In terms of assembly, homooligomer. Interacts with MYBBP1A; inhibits MYBBP1A transcriptional activation. Interacts with PRDM16, LPIN1 and PML. Interacts (via LXXLL motif) with RORA and RORC (via AF-2 motif); activates RORA and RORC transcriptional activation. Interacts with LRPPRC. Interacts with FOXO1. Interacts with NR5A2. In terms of processing, phosphorylation by AMPK in skeletal muscle increases activation of its own promoter. Phosphorylated by CLK2. Heavily acetylated by KAT2A/GCN5 under conditions of high nutrients, leading to inactivation of PPARGC1A. Deacetylated by SIRT1 in low nutrients/high NAD conditions, leading to its activation. Post-translationally, ubiquitinated. Ubiquitination by RNF34 induces proteasomal degradation.

The protein resides in the nucleus. Its subcellular location is the PML body. Functionally, transcriptional coactivator for steroid receptors and nuclear receptors. Greatly increases the transcriptional activity of PPARG and thyroid hormone receptor on the uncoupling protein promoter. Can regulate key mitochondrial genes that contribute to the program of adaptive thermogenesis. Plays an essential role in metabolic reprogramming in response to dietary availability through coordination of the expression of a wide array of genes involved in glucose and fatty acid metabolism. Acts as a key regulator of gluconeogenesis: stimulates hepatic gluconeogenesis by increasing the expression of gluconeogenic enzymes, and acting together with FOXO1 to promote the fasting gluconeogenic program. Induces the expression of PERM1 in the skeletal muscle in an ESRRA-dependent manner. Also involved in the integration of the circadian rhythms and energy metabolism. Required for oscillatory expression of clock genes, such as BMAL1 and NR1D1, through the coactivation of RORA and RORC, and metabolic genes, such as PDK4 and PEPCK. The protein is Peroxisome proliferator-activated receptor gamma coactivator 1-alpha (Ppargc1a) of Rattus norvegicus (Rat).